The sequence spans 995 residues: S1 RNA-binding domain-containing protein 1 (995 aa).

A disordered region spans residues 23–81; that stretch reads SFSELSSASEEDDKEDSAWEPQKKVPRSRKQPPPKESKPKRMPRVKKNAPQISDGSEVV. Residues Lys84 and Lys134 each participate in a glycyl lysine isopeptide (Lys-Gly) (interchain with G-Cter in SUMO2) cross-link. The interval 120–165 is disordered; sequence CAAQPHTVRRTKKLKVEEETSKASNLEGESNSSETPSTSTVWGGTC. Residues 146–159 are compositionally biased toward low complexity; the sequence is EGESNSSETPSTST. Glycyl lysine isopeptide (Lys-Gly) (interchain with G-Cter in SUMO2) cross-links involve residues Lys166, Lys167, and Lys183. A Glycyl lysine isopeptide (Lys-Gly) (interchain with G-Cter in SUMO1); alternate cross-link involves residue Lys185. A Glycyl lysine isopeptide (Lys-Gly) (interchain with G-Cter in SUMO2); alternate cross-link involves residue Lys185. Positions 258–288 form a coiled coil; that stretch reads ADSLREVQQTLEELRAVAKKVHSTIQKIKKE. Ser861 is subject to Phosphoserine. The S1 motif domain occupies 919-992; sequence GTVLTGKVEN…PRSRITLDLI (74 aa). A Glycyl lysine isopeptide (Lys-Gly) (interchain with G-Cter in SUMO2) cross-link involves residue Lys955. At Ser964 the chain carries Phosphoserine.

The sequence is that of S1 RNA-binding domain-containing protein 1 (SRBD1) from Homo sapiens (Human).